Here is a 308-residue protein sequence, read N- to C-terminus: Ornithine carbamoyltransferase (308 aa).

Carbamoyl phosphate-binding positions include 56–59 (STRT), Gln83, Arg107, and 134–137 (HPCQ). Residues Asn165, Asp225, and 229-230 (SM) contribute to the L-ornithine site. Carbamoyl phosphate-binding positions include 266–267 (CL) and Arg294.

The protein belongs to the aspartate/ornithine carbamoyltransferase superfamily. OTCase family.

It is found in the cytoplasm. The enzyme catalyses carbamoyl phosphate + L-ornithine = L-citrulline + phosphate + H(+). It participates in amino-acid biosynthesis; L-arginine biosynthesis; L-arginine from L-ornithine and carbamoyl phosphate: step 1/3. Reversibly catalyzes the transfer of the carbamoyl group from carbamoyl phosphate (CP) to the N(epsilon) atom of ornithine (ORN) to produce L-citrulline. The polypeptide is Ornithine carbamoyltransferase (Ruegeria pomeroyi (strain ATCC 700808 / DSM 15171 / DSS-3) (Silicibacter pomeroyi)).